The sequence spans 461 residues: ATP synthase subunit beta (461 aa).

Residue 151 to 158 participates in ATP binding; it reads GGAGVGKT.

Belongs to the ATPase alpha/beta chains family. F-type ATPases have 2 components, CF(1) - the catalytic core - and CF(0) - the membrane proton channel. CF(1) has five subunits: alpha(3), beta(3), gamma(1), delta(1), epsilon(1). CF(0) has three main subunits: a(1), b(2) and c(9-12). The alpha and beta chains form an alternating ring which encloses part of the gamma chain. CF(1) is attached to CF(0) by a central stalk formed by the gamma and epsilon chains, while a peripheral stalk is formed by the delta and b chains.

The protein resides in the cell inner membrane. The catalysed reaction is ATP + H2O + 4 H(+)(in) = ADP + phosphate + 5 H(+)(out). Its function is as follows. Produces ATP from ADP in the presence of a proton gradient across the membrane. The catalytic sites are hosted primarily by the beta subunits. This is ATP synthase subunit beta from Colwellia psychrerythraea (strain 34H / ATCC BAA-681) (Vibrio psychroerythus).